Reading from the N-terminus, the 328-residue chain is tRNA uridine(34) hydroxylase (328 aa).

Residues 130 to 224 (LDEDTVVLDT…YGKDPEVQGE (95 aa)) form the Rhodanese domain. Cys-184 serves as the catalytic Cysteine persulfide intermediate.

It belongs to the TrhO family.

It catalyses the reaction uridine(34) in tRNA + AH2 + O2 = 5-hydroxyuridine(34) in tRNA + A + H2O. Functionally, catalyzes oxygen-dependent 5-hydroxyuridine (ho5U) modification at position 34 in tRNAs. This Streptococcus agalactiae serotype Ia (strain ATCC 27591 / A909 / CDC SS700) protein is tRNA uridine(34) hydroxylase.